Here is a 596-residue protein sequence, read N- to C-terminus: ATP-dependent lipid A-core flippase (596 aa).

6 helical membrane passes run 34 to 54, 80 to 100, 138 to 158, 164 to 184, 263 to 283, and 292 to 312; these read VWVLVAGVLAMAAVAATEAGI, AAVVGLALARAIAQYASGYLL, AVVFEVNQVLSVLMGVTITLV, VVFLLGYLFYLNWRLTLIVAI, QPLTQFLASIALAVVLTIAVV, and VGGFVAFVTAMLLIISPLKHL. The ABC transmembrane type-1 domain maps to 38–321; the sequence is VAGVLAMAAV…LMDVNQPLQR (284 aa). The ABC transporter domain occupies 353–589; it reads IEFSHVSFSY…GGLYAHLHRI (237 aa). 389–396 is an ATP binding site; the sequence is GPSGSGKT.

Belongs to the ABC transporter superfamily. Lipid exporter (TC 3.A.1.106) family. As to quaternary structure, homodimer.

Its subcellular location is the cell inner membrane. It catalyses the reaction ATP + H2O + lipid A-core oligosaccharideSide 1 = ADP + phosphate + lipid A-core oligosaccharideSide 2.. Involved in lipopolysaccharide (LPS) biosynthesis. Translocates lipid A-core from the inner to the outer leaflet of the inner membrane. Transmembrane domains (TMD) form a pore in the inner membrane and the ATP-binding domain (NBD) is responsible for energy generation. The chain is ATP-dependent lipid A-core flippase from Burkholderia mallei (strain ATCC 23344).